A 439-amino-acid chain; its full sequence is L-cysteine:1D-myo-inositol 2-amino-2-deoxy-alpha-D-glucopyranoside ligase 2 (439 aa).

Cys-60 contacts Zn(2+). L-cysteinyl-5'-AMP-binding positions include 60-63 (CGIT), Thr-75, and 98-100 (NVT). The short motif at 62–72 (ITPYDSTHLGH) is the 'HIGH' region element. Positions 203–208 (ERGGDP) match the 'ERGGDP' region motif. Position 243 (Trp-243) interacts with L-cysteinyl-5'-AMP. Cys-247 contacts Zn(2+). 265-267 (GVD) lines the L-cysteinyl-5'-AMP pocket. Zn(2+) is bound at residue His-272. Ile-299 is a binding site for L-cysteinyl-5'-AMP. The 'KMSKS' region motif lies at 305 to 309 (KMSKS).

The protein belongs to the class-I aminoacyl-tRNA synthetase family. MshC subfamily. Monomer. Requires Zn(2+) as cofactor.

It catalyses the reaction 1D-myo-inositol 2-amino-2-deoxy-alpha-D-glucopyranoside + L-cysteine + ATP = 1D-myo-inositol 2-(L-cysteinylamino)-2-deoxy-alpha-D-glucopyranoside + AMP + diphosphate + H(+). Its function is as follows. Catalyzes the ATP-dependent condensation of GlcN-Ins and L-cysteine to form L-Cys-GlcN-Ins. This chain is L-cysteine:1D-myo-inositol 2-amino-2-deoxy-alpha-D-glucopyranoside ligase 2, found in Corynebacterium urealyticum (strain ATCC 43042 / DSM 7109).